Here is a 532-residue protein sequence, read N- to C-terminus: Invertase 2 (532 aa).

Positions 1–19 (MLLQAFLFLLAGFAAKISA) are cleaved as a signal peptide. An N-linked (GlcNAc...) asparagine glycan is attached at asparagine 23. Residues 39–42 (WMND) and glutamine 60 contribute to the substrate site. Residue aspartate 42 is part of the active site. A glycan (N-linked (GlcNAc...) asparagine; partial) is linked at asparagine 64. Residue asparagine 97 is glycosylated (N-linked (GlcNAc...) asparagine). A substrate-binding site is contributed by 102-103 (FS). Asparagine 111 and asparagine 118 each carry an N-linked (GlcNAc...) asparagine glycan. N-linked (GlcNAc...) asparagine; partial glycosylation occurs at asparagine 165. Residues 170 to 171 (RD) and glutamate 223 each bind substrate. N-linked (GlcNAc...) asparagine; partial glycans are attached at residues asparagine 266 and asparagine 275. Residue tryptophan 311 participates in substrate binding. Residues asparagine 356, asparagine 369, asparagine 384, and asparagine 398 are each glycosylated (N-linked (GlcNAc...) asparagine). Asparagine 512 carries N-linked (GlcNAc...) asparagine; partial glycosylation.

Belongs to the glycosyl hydrolase 32 family. Isoform Secreted is glycosylated. Isoform Intracellular is not glycosylated.

It localises to the cytoplasm. It is found in the secreted. The catalysed reaction is Hydrolysis of terminal non-reducing beta-D-fructofuranoside residues in beta-D-fructofuranosides.. This chain is Invertase 2 (SUC2), found in Saccharomyces cerevisiae (strain ATCC 204508 / S288c) (Baker's yeast).